We begin with the raw amino-acid sequence, 417 residues long: Serine hydroxymethyltransferase (417 aa).

(6S)-5,6,7,8-tetrahydrofolate contacts are provided by residues Leu121 and 125 to 127; that span reads GHL. Position 229 is an N6-(pyridoxal phosphate)lysine (Lys229). 355-357 lines the (6S)-5,6,7,8-tetrahydrofolate pocket; sequence SPF.

It belongs to the SHMT family. As to quaternary structure, homodimer. The cofactor is pyridoxal 5'-phosphate.

Its subcellular location is the cytoplasm. It carries out the reaction (6R)-5,10-methylene-5,6,7,8-tetrahydrofolate + glycine + H2O = (6S)-5,6,7,8-tetrahydrofolate + L-serine. It functions in the pathway one-carbon metabolism; tetrahydrofolate interconversion. The protein operates within amino-acid biosynthesis; glycine biosynthesis; glycine from L-serine: step 1/1. Catalyzes the reversible interconversion of serine and glycine with tetrahydrofolate (THF) serving as the one-carbon carrier. This reaction serves as the major source of one-carbon groups required for the biosynthesis of purines, thymidylate, methionine, and other important biomolecules. Also exhibits THF-independent aldolase activity toward beta-hydroxyamino acids, producing glycine and aldehydes, via a retro-aldol mechanism. In Serratia proteamaculans (strain 568), this protein is Serine hydroxymethyltransferase.